Reading from the N-terminus, the 456-residue chain is Chromosomal replication initiator protein DnaA 1 (456 aa).

The segment at 1-68 is domain I, interacts with DnaA modulators; the sequence is MRAWEEFLLL…KANLINNNGK (68 aa). Residues 68-101 form a domain II region; it reads KPIRVRVTSLDKSTPFKESQIQQEKTAYFTMQYG. Residues 102 to 320 form a domain III, AAA+ region region; it reads DIDPQMSFAN…HALTTLAKRV (219 aa). Ser-150, Gly-152, Lys-153, and Thr-154 together coordinate ATP. The interval 321 to 456 is domain IV, binds dsDNA; it reads AYKKLSHQLL…AYQSLDLIVD (136 aa).

The protein belongs to the DnaA family. In terms of assembly, oligomerizes as a right-handed, spiral filament on DNA at oriC.

The protein localises to the cytoplasm. Its function is as follows. Plays an essential role in the initiation and regulation of chromosomal replication. ATP-DnaA binds to the origin of replication (oriC) to initiate formation of the DNA replication initiation complex once per cell cycle. Binds the DnaA box (a 9 base pair repeat at the origin) and separates the double-stranded (ds)DNA. Forms a right-handed helical filament on oriC DNA; dsDNA binds to the exterior of the filament while single-stranded (ss)DNA is stabiized in the filament's interior. The ATP-DnaA-oriC complex binds and stabilizes one strand of the AT-rich DNA unwinding element (DUE), permitting loading of DNA polymerase. After initiation quickly degrades to an ADP-DnaA complex that is not apt for DNA replication. Binds acidic phospholipids. The protein is Chromosomal replication initiator protein DnaA 1 of Chlamydia muridarum (strain MoPn / Nigg).